We begin with the raw amino-acid sequence, 263 residues long: Small ribosomal subunit protein eS4 (263 aa).

Residues 42 to 104 (LPLIIFLRNK…TGENFRLIYD (63 aa)) enclose the S4 RNA-binding domain. A Glycyl lysine isopeptide (Lys-Gly) (interchain with G-Cter in SUMO2) cross-link involves residue K230. An N6-acetyllysine modification is found at K233.

It belongs to the eukaryotic ribosomal protein eS4 family. Component of the small ribosomal subunit. Part of the small subunit (SSU) processome, composed of more than 70 proteins and the RNA chaperone small nucleolar RNA (snoRNA) U3. Identified in a IGF2BP1-dependent mRNP granule complex containing untranslated mRNAs.

It localises to the cytoplasm. It is found in the nucleus. The protein localises to the nucleolus. Functionally, component of the small ribosomal subunit. The ribosome is a large ribonucleoprotein complex responsible for the synthesis of proteins in the cell. Part of the small subunit (SSU) processome, first precursor of the small eukaryotic ribosomal subunit. During the assembly of the SSU processome in the nucleolus, many ribosome biogenesis factors, an RNA chaperone and ribosomal proteins associate with the nascent pre-rRNA and work in concert to generate RNA folding, modifications, rearrangements and cleavage as well as targeted degradation of pre-ribosomal RNA by the RNA exosome. The polypeptide is Small ribosomal subunit protein eS4 (RPS4X) (Oryctolagus cuniculus (Rabbit)).